A 355-amino-acid polypeptide reads, in one-letter code: Elongation factor Ts (355 aa).

Positions Thr-82–Val-85 are involved in Mg(2+) ion dislocation from EF-Tu.

It belongs to the EF-Ts family.

The protein resides in the cytoplasm. In terms of biological role, associates with the EF-Tu.GDP complex and induces the exchange of GDP to GTP. It remains bound to the aminoacyl-tRNA.EF-Tu.GTP complex up to the GTP hydrolysis stage on the ribosome. The polypeptide is Elongation factor Ts (Helicobacter pylori (strain Shi470)).